Consider the following 218-residue polypeptide: Ras-related protein Rab-4A (218 aa).

The GTP site is built by G23, T24, G25, K26, S27, C28, S42, H44, and T45. S27 contributes to the Mg(2+) binding site. The Switch 1 signature appears at 44 to 49; that stretch reads HTIGVE. Mg(2+) is bound by residues T45 and D68. Residues 70–79 carry the Switch 2 motif; it reads AGQERFRSVT. G71 serves as a coordination point for GTP. Q72 is modified (5-glutamyl serotonin). Residues N126, K127, D129, A157, and L158 each coordinate GTP. A Phosphoserine modification is found at S190. S204 carries the post-translational modification Phosphoserine; by CDK1. S-geranylgeranyl cysteine attachment occurs at residues C216 and C218. C218 carries the cysteine methyl ester modification.

This sequence belongs to the small GTPase superfamily. Rab family. As to quaternary structure, interacts with RAB11FIP1, RABEP1, ZFYVE20 and RUFY1. Interacts with SGSM1, SGSM2 and SGSM3. Interacts (membrane-bound form) with NDRG1; the interaction involves NDRG1 in vesicular recycling of E-cadherin. Interacts (in GTP-bound form) with GRIPAP1. Interacts with RABEP1 and RBSN. Does not interact with HPS4. Mg(2+) serves as cofactor. In terms of processing, serotonylation of Gln-72 by TGM2 during activation and aggregation of platelets leads to constitutive activation of GTPase activity. Post-translationally, phosphorylated by CDK1 kinase during mitosis.

The protein resides in the membrane. The protein localises to the cytoplasm. It is found in the early endosome membrane. It localises to the recycling endosome membrane. It carries out the reaction GTP + H2O = GDP + phosphate + H(+). Its activity is regulated as follows. Regulated by guanine nucleotide exchange factors (GEFs) which promote the exchange of bound GDP for free GTP. Regulated by GTPase activating proteins (GAPs) which increase the GTP hydrolysis activity. Inhibited by GDP dissociation inhibitors (GDIs). Functionally, the small GTPases Rab are key regulators of intracellular membrane trafficking, from the formation of transport vesicles to their fusion with membranes. Rabs cycle between an inactive GDP-bound form and an active GTP-bound form that is able to recruit to membranes different sets of downstream effectors directly responsible for vesicle formation, movement, tethering and fusion. RAB4A is involved in protein transport. Also plays a role in vesicular traffic. Mediates VEGFR2 endosomal trafficking to enhance VEGFR2 signaling. Acts as a regulator of platelet alpha-granule release during activation and aggregation of platelets. The polypeptide is Ras-related protein Rab-4A (RAB4A) (Bos taurus (Bovine)).